We begin with the raw amino-acid sequence, 931 residues long: Myocardin-related transcription factor A (931 aa).

Residues 1–256 (MPPLKSPAAF…KQDRGAPPMD (256 aa)) are mediates interaction with SCAI and ACTB. Serine 6 is subject to Phosphoserine. Residues 6–23 (SPAAFHEQRRSLERARTE) are intervening spacer sequence 1. The stretch at 24 to 49 (DYLKRKIRSRPERSELVRMHILEETS) is one RPEL 1 repeat. The Bipartite Nuclear localization signal motif lies at 27–65 (KRKIRSRPERSELVRMHILEETSAEPSLQAKQLKLKRAR). The interval 50–67 (AEPSLQAKQLKLKRARLA) is intervening spacer sequence 2. The stretch at 68 to 93 (DDLNEKIAQRPGPMELVEKNILPVES) is one RPEL 2 repeat. 2 disordered regions span residues 110–256 (ADSS…PPMD) and 290–344 (PAPP…GALP). A phosphoserine mark is found at serine 124, serine 139, and serine 156. Over residues 151–162 (SATSASPTQVVS) the composition is skewed to polar residues. Over residues 180–189 (PPLPPPPLLP) the composition is skewed to pro residues. Positions 191-215 (SLTNGTTIPTAKSTPTLIKQSQPKS) are enriched in polar residues. The span at 216–231 (ASEKSQRSKKAKELKP) shows a compositional bias: basic and acidic residues. The residue at position 305 (threonine 305) is a Phosphothreonine. Residues serine 310 and serine 312 each carry the phosphoserine modification. Positions 310–320 (SLSTTNSSSSS) are enriched in low complexity. Position 313 is a phosphothreonine (threonine 313). 3 positions are modified to phosphoserine: serine 317, serine 320, and serine 333. Residues 347–381 (LDDMKVAELKQELKLRSLPVSGTKTELIERLRAYQ) form the SAP domain. A phosphoserine mark is found at serine 385 and serine 446. The disordered stretch occupies residues 444–476 (FGSTGSTPPVSPTPSERSLLSTGDENSTPGDTF). Threonine 447 carries the phosphothreonine modification. Serine 449 carries the post-translational modification Phosphoserine. Threonine 450 is modified (phosphothreonine). Serine 454 carries the phosphoserine modification. Threonine 456 carries the post-translational modification Phosphothreonine. Residue serine 458 is modified to Phosphoserine. The span at 459–473 (ERSLLSTGDENSTPG) shows a compositional bias: polar residues. Phosphoserine occurs at positions 482, 492, 507, and 511. Residues 515-563 (RAELEGRDKDQMLQEKDKQIEALTRMLRQKQQLVERLKLQLEQEKRAQQ) are a coiled coil. Disordered stretches follow at residues 558 to 577 (EKRA…PVKQ), 674 to 746 (KNAD…SSSQ), and 763 to 816 (ADFK…RLED). Over residues 678-694 (SPGLSSGSPQQPSSQPG) the composition is skewed to low complexity. Residues serine 685, serine 691, and serine 695 each carry the phosphoserine modification. Residues 732 to 746 (MSQQPKQQENGSSSQ) are compositionally biased toward polar residues. The segment covering 763–778 (ADFKEPPSLPGKEKPS) has biased composition (basic and acidic residues). The span at 784-799 (GSPLAAQPSPSAELPQ) shows a compositional bias: low complexity. A phosphoserine mark is found at serine 792, serine 807, and serine 859.

Interacts with SRF, forming the SRF-MRTFA nuclear complex which binds the 5'-CArG-3' consensus motif (CArG box) on DNA via SRF. Interacts (via RPEL repeats) with globular actin (G-actin), thereby regulating its subcellular location and activity of the complex formed with SRF. Either forms a trivalent (by binding three G-actin monomers) or pentavalent (by binding five G-actin monomers) complex with G-actin. Forms a nuclear ternary complex with SCAI and SRF, leading to suppress MRTFA-induced SRF transcriptional activity. Interacts with beta-actin (ACTB); interaction with ACTB prevents interaction with SCAI. Interacts with MRTFB. In terms of processing, phosphorylation at Ser-6 by Erk inhibits binding of globular actin (G-actin), unmasking the nuclear localization signal (NLS) and promoting nuclear import. As to expression, ubiquitously expressed, has been detected in lung, placenta, small intestine, liver, kidney, spleen, thymus, colon, muscle, heart and brain. Expressed in peripheral blood mononuclear cells (at protein level).

It is found in the cytoplasm. The protein localises to the nucleus. In terms of biological role, transcription coactivator that associates with the serum response factor (SRF) transcription factor to control expression of genes regulating the cytoskeleton during development, morphogenesis and cell migration. The SRF-MRTFA complex activity responds to Rho GTPase-induced changes in cellular globular actin (G-actin) concentration, thereby coupling cytoskeletal gene expression to cytoskeletal dynamics. MRTFA binds G-actin via its RPEL repeats, regulating activity of the MRTFA-SRF complex. Activity is also regulated by filamentous actin (F-actin) in the nucleus. The protein is Myocardin-related transcription factor A of Homo sapiens (Human).